We begin with the raw amino-acid sequence, 101 residues long: Small ribosomal subunit protein uS14 (101 aa).

The protein belongs to the universal ribosomal protein uS14 family. In terms of assembly, part of the 30S ribosomal subunit. Contacts proteins S3 and S10.

In terms of biological role, binds 16S rRNA, required for the assembly of 30S particles and may also be responsible for determining the conformation of the 16S rRNA at the A site. In Burkholderia ambifaria (strain MC40-6), this protein is Small ribosomal subunit protein uS14.